Reading from the N-terminus, the 105-residue chain is Small ribosomal subunit protein uS10c (105 aa).

The protein belongs to the universal ribosomal protein uS10 family. Part of the 30S ribosomal subunit.

The protein resides in the plastid. Its subcellular location is the cyanelle. Functionally, involved in the binding of tRNA to the ribosomes. This is Small ribosomal subunit protein uS10c (rps10) from Cyanophora paradoxa.